Here is a 534-residue protein sequence, read N- to C-terminus: Glycolytic genes transcriptional activator GCR2 (534 aa).

Residues 29–122 (LQSVTNSPQT…TGNNASSSAT (94 aa)) form a disordered region. Over residues 30-43 (QSVTNSPQTTTNTP) the composition is skewed to low complexity. The span at 64 to 88 (SDSTPNIDEIITSTGSNALTKTNSD) shows a compositional bias: polar residues. Over residues 89–122 (SANGTPNGNSSSTSAISNASNPATTGNNASSSAT) the composition is skewed to low complexity. Residue Ser-151 is modified to Phosphoserine. Residues 230-333 (LTQGRRKGNS…SNPGTNMLFD (104 aa)) form a disordered region. Positions 238–252 (NSLNTSTKGSPSDLQ) are enriched in polar residues. Low complexity predominate over residues 253 to 279 (GINNGNNNGNNGNIGNGSNIKNYGNKN). Residues 281-288 (PNNRTKKR) carry the Nuclear localization signal motif. Positions 295 to 304 (NAKNGKNNKN) are enriched in low complexity. A compositionally biased stretch (polar residues) spans 312-328 (ITDTSAFSNTTISNPGT). Phosphoserine occurs at positions 406 and 409. The segment at 497 to 534 (IVQLERELELQRQETQWLRKMLIEDMGCVRSMLRDLQR) is leucine-zipper.

As to quaternary structure, homodimer via the leucine-zipper domain. Forms a complex with a GCR1 homodimer.

Its subcellular location is the nucleus. Its function is as follows. Transcriptional activator required for the expression of glycolytic genes. Enhances the CT box-dependent transcriptional activation of a RAP1-GCR1 complex. Required for GCR1 phosphorylation. This chain is Glycolytic genes transcriptional activator GCR2 (GCR2), found in Saccharomyces cerevisiae (strain ATCC 204508 / S288c) (Baker's yeast).